The following is a 206-amino-acid chain: Ribosomal RNA large subunit methyltransferase E (206 aa).

The S-adenosyl-L-methionine site is built by Gly60, Trp62, Asp80, Asp96, and Asp121. The active-site Proton acceptor is Lys161.

This sequence belongs to the class I-like SAM-binding methyltransferase superfamily. RNA methyltransferase RlmE family.

It localises to the cytoplasm. The enzyme catalyses uridine(2552) in 23S rRNA + S-adenosyl-L-methionine = 2'-O-methyluridine(2552) in 23S rRNA + S-adenosyl-L-homocysteine + H(+). Specifically methylates the uridine in position 2552 of 23S rRNA at the 2'-O position of the ribose in the fully assembled 50S ribosomal subunit. The sequence is that of Ribosomal RNA large subunit methyltransferase E from Saccharophagus degradans (strain 2-40 / ATCC 43961 / DSM 17024).